Consider the following 63-residue polypeptide: Putative transmembrane protein ORF63 (63 aa).

Over 1–8 (MQSGNFTL) the chain is Extracellular. A helical membrane pass occupies residues 9–29 (EVIMYLINSILAFIMIFFTFV). Residues 30-31 (NP) lie on the Cytoplasmic side of the membrane. A helical membrane pass occupies residues 32–52 (SLLKCQYWTYILVALITAIIF). The Extracellular portion of the chain corresponds to 53–63 (HTGSKVGKSSG).

Its subcellular location is the host membrane. In Acidianus filamentous virus 1 (isolate United States/Yellowstone) (AFV-1), this protein is Putative transmembrane protein ORF63.